We begin with the raw amino-acid sequence, 82 residues long: ATP synthase subunit c (82 aa).

Helical transmembrane passes span 3 to 23 and 57 to 77; these read PLIASASVLAAALAIGLASLG and LAFMESLTIYGLVIALVLLFA.

F-type ATPases have 2 components, F(1) - the catalytic core - and F(0) - the membrane proton channel. F(1) has five subunits: alpha(3), beta(3), gamma(1), delta(1), epsilon(1). F(0) has four main subunits: a(1), b(1), b'(1) and c(10-14). The alpha and beta chains form an alternating ring which encloses part of the gamma chain. F(1) is attached to F(0) by a central stalk formed by the gamma and epsilon chains, while a peripheral stalk is formed by the delta, b and b' chains.

It localises to the cellular thylakoid membrane. With respect to regulation, inhibited by dicyclohexylcarbodiimide. F(1)F(0) ATP synthase produces ATP from ADP in the presence of a proton or sodium gradient. F-type ATPases consist of two structural domains, F(1) containing the extramembraneous catalytic core and F(0) containing the membrane proton channel, linked together by a central stalk and a peripheral stalk. During catalysis, ATP synthesis in the catalytic domain of F(1) is coupled via a rotary mechanism of the central stalk subunits to proton translocation. In terms of biological role, key component of the F(0) channel; it plays a direct role in translocation across the membrane. A homomeric c-ring of between 10-14 subunits forms the central stalk rotor element with the F(1) delta and epsilon subunits. Functionally, the complex from the organism is particularly stable to disruption and remains functional after 6 hrs at 55 degrees Celsius. The protein is ATP synthase subunit c (atpE) of Thermosynechococcus vestitus (strain NIES-2133 / IAM M-273 / BP-1).